The sequence spans 118 residues: Basic phospholipase A2 acanthin-2 (118 aa).

Intrachain disulfides connect cysteine 11-cysteine 71, cysteine 27-cysteine 117, cysteine 29-cysteine 45, cysteine 44-cysteine 98, cysteine 51-cysteine 91, cysteine 60-cysteine 84, and cysteine 78-cysteine 89. Residues tyrosine 28, glycine 30, and glycine 32 each coordinate Ca(2+). The active site involves histidine 48. Position 49 (aspartate 49) interacts with Ca(2+). Residue aspartate 92 is part of the active site.

The cofactor is Ca(2+). Expressed by the venom gland.

It localises to the secreted. The catalysed reaction is a 1,2-diacyl-sn-glycero-3-phosphocholine + H2O = a 1-acyl-sn-glycero-3-phosphocholine + a fatty acid + H(+). Its function is as follows. Snake venom phospholipase A2 (PLA2) that potently inhibits ADP-(IC(50)=12 nM) and collagen-induced (IC(50)=4 nM) platelet aggregation when tested on human whole blood. PLA2 catalyzes the calcium-dependent hydrolysis of the 2-acyl groups in 3-sn-phosphoglycerides. This is Basic phospholipase A2 acanthin-2 from Acanthophis antarcticus (Common death adder).